The primary structure comprises 265 residues: Phosphate import ATP-binding protein PstB (265 aa).

An ABC transporter domain is found at 18-260 (MECRDCHVYY…PEDPRTESYI (243 aa)). Residue 50–57 (GPSGCGKS) participates in ATP binding.

The protein belongs to the ABC transporter superfamily. Phosphate importer (TC 3.A.1.7) family. As to quaternary structure, the complex is composed of two ATP-binding proteins (PstB), two transmembrane proteins (PstC and PstA) and a solute-binding protein (PstS).

The protein localises to the cell inner membrane. The enzyme catalyses phosphate(out) + ATP + H2O = ADP + 2 phosphate(in) + H(+). In terms of biological role, part of the ABC transporter complex PstSACB involved in phosphate import. Responsible for energy coupling to the transport system. The polypeptide is Phosphate import ATP-binding protein PstB (Ruegeria pomeroyi (strain ATCC 700808 / DSM 15171 / DSS-3) (Silicibacter pomeroyi)).